A 415-amino-acid chain; its full sequence is Squalene synthase 12 (415 aa).

2 helical membrane passes run 281 to 301 (AIFR…ALCF) and 391 to 411 (LIAI…SNLL).

The protein belongs to the phytoene/squalene synthase family. It depends on Mg(2+) as a cofactor. The cofactor is Mn(2+).

The protein localises to the endoplasmic reticulum membrane. It carries out the reaction 2 (2E,6E)-farnesyl diphosphate + NADH + H(+) = squalene + 2 diphosphate + NAD(+). It catalyses the reaction 2 (2E,6E)-farnesyl diphosphate + NADPH + H(+) = squalene + 2 diphosphate + NADP(+). The protein operates within terpene metabolism; lanosterol biosynthesis; lanosterol from farnesyl diphosphate: step 1/3. Component of the triterpene saponins (e.g. ginsenosides or panaxosides) and phytosterols biosynthetic pathways. Catalyzes the biosynthesis of squalene. This chain is Squalene synthase 12, found in Panax ginseng (Korean ginseng).